The following is an 89-amino-acid chain: Putative regulatory protein BPUM_1466 (89 aa).

This sequence belongs to the RemA family.

In Bacillus pumilus (strain SAFR-032), this protein is Putative regulatory protein BPUM_1466.